Here is a 105-residue protein sequence, read N- to C-terminus: N(4)-acetylcytidine amidohydrolase (105 aa).

An ASCH domain is found at 8 to 93 (TFFEFLTPLV…ALIQEIYPNI (86 aa)). Residue Lys-22 is the Proton acceptor of the active site. The active-site Nucleophile is Thr-25. Glu-75 serves as the catalytic Proton donor.

It belongs to the N(4)-acetylcytidine amidohydrolase family.

It catalyses the reaction N(4)-acetylcytidine + H2O = cytidine + acetate + H(+). It carries out the reaction N(4)-acetyl-2'-deoxycytidine + H2O = 2'-deoxycytidine + acetate + H(+). The catalysed reaction is N(4)-acetylcytosine + H2O = cytosine + acetate + H(+). Functionally, catalyzes the hydrolysis of N(4)-acetylcytidine (ac4C). The sequence is that of N(4)-acetylcytidine amidohydrolase from Vibrio cholerae serotype O1 (strain ATCC 39315 / El Tor Inaba N16961).